The following is a 299-amino-acid chain: F-actin-capping protein subunit alpha-3 (299 aa).

Phosphoserine occurs at positions 2 and 290.

Belongs to the F-actin-capping protein alpha subunit family. As to quaternary structure, component of the F-actin capping complex, composed of a heterodimer of an alpha and a beta subunit. Component of the WASH complex, composed of F-actin-capping protein subunit alpha (CAPZA1, CAPZA2 or CAPZA3), F-actin-capping protein subunit beta (CAPZB), WASHC1, WASHC2, WASHC3, WASHC4 and WASHC5. In terms of tissue distribution, exclusively expressed in the testis.

The protein resides in the cytoplasm. It localises to the cytoskeleton. Functionally, F-actin-capping proteins bind in a Ca(2+)-independent manner to the fast growing ends of actin filaments (barbed end) thereby blocking the exchange of subunits at these ends. Unlike other capping proteins (such as gelsolin and severin), these proteins do not sever actin filaments. May play a role in the morphogenesis of spermatid. This chain is F-actin-capping protein subunit alpha-3 (Capza3), found in Rattus norvegicus (Rat).